A 549-amino-acid polypeptide reads, in one-letter code: Chaperonin GroEL (549 aa).

ATP is bound by residues 29–32, lysine 50, 86–90, glycine 414, 478–480, and aspartate 494; these read TLGP, DGTTT, and NAA.

This sequence belongs to the chaperonin (HSP60) family. In terms of assembly, forms a cylinder of 14 subunits composed of two heptameric rings stacked back-to-back. Interacts with the co-chaperonin GroES.

The protein resides in the cytoplasm. It carries out the reaction ATP + H2O + a folded polypeptide = ADP + phosphate + an unfolded polypeptide.. Its function is as follows. Together with its co-chaperonin GroES, plays an essential role in assisting protein folding. The GroEL-GroES system forms a nano-cage that allows encapsulation of the non-native substrate proteins and provides a physical environment optimized to promote and accelerate protein folding. This chain is Chaperonin GroEL, found in Psychrobacter cryohalolentis (strain ATCC BAA-1226 / DSM 17306 / VKM B-2378 / K5).